The primary structure comprises 556 residues: Delta-1-pyrroline-5-carboxylate dehydrogenase, mitochondrial (556 aa).

The transit peptide at 1–17 (MLRARSAVSQSWKGFKT) directs the protein to the mitochondrion. NAD(+) contacts are provided by residues lysine 226 and 279 to 283 (GSVPT). Glutamate 307 (proton acceptor) is an active-site residue. Residue cysteine 341 is the Nucleophile of the active site. Residue glutamate 440 participates in NAD(+) binding. Position 506 (serine 506) interacts with substrate.

This sequence belongs to the aldehyde dehydrogenase family.

Its subcellular location is the mitochondrion matrix. The catalysed reaction is L-glutamate 5-semialdehyde + NAD(+) + H2O = L-glutamate + NADH + 2 H(+). Its pathway is amino-acid degradation; L-proline degradation into L-glutamate; L-glutamate from L-proline: step 2/2. Functionally, irreversible conversion of delta-1-pyrroline-5-carboxylate (P5C), derived either from proline or ornithine, to glutamate. This is a necessary step in the pathway interconnecting the urea and tricarboxylic acid cycles. The sequence is that of Delta-1-pyrroline-5-carboxylate dehydrogenase, mitochondrial (aldh4a1) from Danio rerio (Zebrafish).